The primary structure comprises 737 residues: Probable beta-glucosidase L (737 aa).

An N-terminal signal peptide occupies residues 1-19 (MRSLIRSGALNAFLAASLA). Asn225 carries an N-linked (GlcNAc...) asparagine glycan. Residue Asp253 is part of the active site. N-linked (GlcNAc...) asparagine glycosylation is found at Asn340, Asn365, and Asn608.

It belongs to the glycosyl hydrolase 3 family.

Its subcellular location is the secreted. The enzyme catalyses Hydrolysis of terminal, non-reducing beta-D-glucosyl residues with release of beta-D-glucose.. It functions in the pathway glycan metabolism; cellulose degradation. In terms of biological role, beta-glucosidases are one of a number of cellulolytic enzymes involved in the degradation of cellulosic biomass. Catalyzes the last step releasing glucose from the inhibitory cellobiose. The sequence is that of Probable beta-glucosidase L (bglL) from Emericella nidulans (strain FGSC A4 / ATCC 38163 / CBS 112.46 / NRRL 194 / M139) (Aspergillus nidulans).